Consider the following 369-residue polypeptide: Core histone macro-H2A.1 (369 aa).

The Histone H2A domain occupies 2–117; it reads SSRGGKKKST…NIHPELLAKK (116 aa). N6-lactoyllysine; alternate is present on residues Lys-7 and Lys-9. Lys-18 bears the N6-methyllysine mark. Lys-116 carries the post-translational modification N6-acetyllysine; alternate. Lys-116 is covalently cross-linked (Glycyl lysine isopeptide (Lys-Gly) (interchain with G-Cter in ubiquitin); alternate). Lys-117 is covalently cross-linked (Glycyl lysine isopeptide (Lys-Gly) (interchain with G-Cter in ubiquitin)). At Lys-123 the chain carries N6-acetyllysine; alternate. Lys-123 carries the N6,N6-dimethyllysine; alternate modification. A Glycyl lysine isopeptide (Lys-Gly) (interchain with G-Cter in SUMO2); alternate cross-link involves residue Lys-123. The disordered stretch occupies residues 128–180; that stretch reads ITPPPAKKAKSPSQKKPVAKKTGGKKGARKSKKKQGEVSKAASADSTTEGTPT. The residue at position 129 (Thr-129) is a Phosphothreonine. Residues 144 to 160 are compositionally biased toward basic residues; the sequence is PVAKKTGGKKGARKSKK. Lys-167 participates in a covalent cross-link: Glycyl lysine isopeptide (Lys-Gly) (interchain with G-Cter in SUMO2). Phosphoserine occurs at positions 170 and 173. The residue at position 178 (Thr-178) is a Phosphothreonine. In terms of domain architecture, Macro spans 184-367; that stretch reads TVLSTKSLFL…IYVQEMAKLD (184 aa). Residue Lys-189 forms a Glycyl lysine isopeptide (Lys-Gly) (interchain with G-Cter in SUMO2) linkage. A glycoprotein-binding residues include Asp-203, Ile-204, Val-226, Ser-275, Gly-312, Ser-313, Gly-314, and Asn-316. A Glycyl lysine isopeptide (Lys-Gly) (interchain with G-Cter in SUMO2) cross-link involves residue Lys-320.

This sequence belongs to the histone H2A family. The nucleosome is a histone octamer containing two molecules each of H2A, H2B, H3 and H4 assembled in one H3-H4 heterotetramer and two H2A-H2B heterodimers. Interacts with HDAC1 and HDAC2. Interacts with SPOP. Part of a complex consisting of MACROH2A1, CUL3 and SPOP. In terms of assembly, interacts with PARP1. In terms of processing, monoubiquitinated at either Lys-116 or Lys-117. May also be polyubiquitinated. Ubiquitination is mediated by the CUL3/SPOP E3 complex and does not promote proteasomal degradation. Instead, it is required for enrichment in inactive X chromosome chromatin. Widely expressed, with high levels in testis. Present in liver, kidney and adrenal gland (at protein level). In the liver, present in hepatocytes and at a lesser extent in cells of the bile ducts. In the kidney, expressed in proximal and distal convoluted tubules and in straight proximal tubules. In the adrenal gland, present in inner cells of the cortex and medulla.

Its subcellular location is the nucleus. The protein localises to the chromosome. Variant histone H2A which replaces conventional H2A in a subset of nucleosomes where it represses transcription. Nucleosomes wrap and compact DNA into chromatin, limiting DNA accessibility to the cellular machineries which require DNA as a template. Histones thereby play a central role in transcription regulation, DNA repair, DNA replication and chromosomal stability. DNA accessibility is regulated via a complex set of post-translational modifications of histones, also called histone code, and nucleosome remodeling. Involved in stable X chromosome inactivation. Inhibits the binding of transcription factors, including NF-kappa-B, and interferes with the activity of remodeling SWI/SNF complexes. Inhibits histone acetylation by EP300 and recruits class I HDACs, which induces a hypoacetylated state of chromatin. In terms of biological role, isoform that specifically binds poly-ADP-ribose and O-acetyl-ADP-ribose and plays a key role in NAD(+) metabolism. Able to bind to the ends of poly-ADP-ribose chains created by PARP1 and cap them. This prevents PARP1 from further addition of ADP-ribose and thus limits the consumption of nuclear NAD(+), allowing the cell to maintain proper NAD(+) levels in both the nucleus and the mitochondria to promote proper mitochondrial respiration. Increases the expression of genes involved in redox metabolism, including SOD3. Functionally, in contrast to isoform 1, does not bind poly-ADP-ribose. Represses SOD3 gene expression. This chain is Core histone macro-H2A.1, found in Mus musculus (Mouse).